The chain runs to 1373 residues: DNA-directed RNA polymerase subunit beta'' (1373 aa).

Cys220, Cys291, Cys298, and Cys301 together coordinate Zn(2+).

This sequence belongs to the RNA polymerase beta' chain family. RpoC2 subfamily. In terms of assembly, in plastids the minimal PEP RNA polymerase catalytic core is composed of four subunits: alpha, beta, beta', and beta''. When a (nuclear-encoded) sigma factor is associated with the core the holoenzyme is formed, which can initiate transcription. The cofactor is Zn(2+).

It localises to the plastid. It is found in the chloroplast. It carries out the reaction RNA(n) + a ribonucleoside 5'-triphosphate = RNA(n+1) + diphosphate. Its function is as follows. DNA-dependent RNA polymerase catalyzes the transcription of DNA into RNA using the four ribonucleoside triphosphates as substrates. This Silene latifolia (White campion) protein is DNA-directed RNA polymerase subunit beta''.